The sequence spans 246 residues: Octanoyltransferase (246 aa).

In terms of domain architecture, BPL/LPL catalytic spans 54–240 (DPPPEAVWLL…CLEPNADAAI (187 aa)). Residues 96-103 (RGGEVTHH), 163-165 (AIG), and 176-178 (GVA) each bind substrate. Cysteine 194 acts as the Acyl-thioester intermediate in catalysis.

It belongs to the LipB family.

It localises to the cytoplasm. The catalysed reaction is octanoyl-[ACP] + L-lysyl-[protein] = N(6)-octanoyl-L-lysyl-[protein] + holo-[ACP] + H(+). The protein operates within protein modification; protein lipoylation via endogenous pathway; protein N(6)-(lipoyl)lysine from octanoyl-[acyl-carrier-protein]: step 1/2. Catalyzes the transfer of endogenously produced octanoic acid from octanoyl-acyl-carrier-protein onto the lipoyl domains of lipoate-dependent enzymes. Lipoyl-ACP can also act as a substrate although octanoyl-ACP is likely to be the physiological substrate. The polypeptide is Octanoyltransferase (Synechococcus sp. (strain WH7803)).